A 341-amino-acid chain; its full sequence is S-adenosylmethionine:tRNA ribosyltransferase-isomerase (341 aa).

Belongs to the QueA family. As to quaternary structure, monomer.

It localises to the cytoplasm. The catalysed reaction is 7-aminomethyl-7-carbaguanosine(34) in tRNA + S-adenosyl-L-methionine = epoxyqueuosine(34) in tRNA + adenine + L-methionine + 2 H(+). Its pathway is tRNA modification; tRNA-queuosine biosynthesis. In terms of biological role, transfers and isomerizes the ribose moiety from AdoMet to the 7-aminomethyl group of 7-deazaguanine (preQ1-tRNA) to give epoxyqueuosine (oQ-tRNA). This chain is S-adenosylmethionine:tRNA ribosyltransferase-isomerase, found in Staphylococcus aureus (strain Mu3 / ATCC 700698).